Reading from the N-terminus, the 136-residue chain is Probable acyltransferase SID5 (136 aa).

Its pathway is siderophore biosynthesis. Functionally, probable acyltransferase; part of the gene cluster that mediates the biosynthesis of hydroxamate-containing siderophores that play a critical role in virulence via intracellular iron acquisition during macrophage infection. This chain is Probable acyltransferase SID5, found in Ajellomyces capsulatus (Darling's disease fungus).